Here is a 264-residue protein sequence, read N- to C-terminus: MKLLVVFAMCVPAASAGVVELSADSMSPSNQDLEDKLYNSILTGDYDSAVRKSLEYESQGQGSIVQNVVNNLIIDKRRNTMEYCYKLWVGNGQDIVKKYFPLSFRLIMAGNYVKLIYRNYNLALKLGSTTNPSNERIAYGDGVDKHTDLVSWKFITLWENNRVYFKAHNTKYNQYLKMSTSTCNCNARDRVVYGGNSADSTREQWFFQPAKYENDVLFFIYNRQFNDALELGTIVNASGDRKAVGHDGEVAGLPDIYSWFITPF.

A signal peptide spans 1–16 (MKLLVVFAMCVPAASA).

This sequence belongs to the 30 kDa lipoprotein family.

Its subcellular location is the secreted. The polypeptide is Low molecular mass lipoprotein PBMHP-12 (Bombyx mori (Silk moth)).